We begin with the raw amino-acid sequence, 133 residues long: UPF0102 protein ABSDF1354 (133 aa).

Belongs to the UPF0102 family.

This chain is UPF0102 protein ABSDF1354, found in Acinetobacter baumannii (strain SDF).